Here is a 482-residue protein sequence, read N- to C-terminus: Glutamate--tRNA ligase (482 aa).

The short motif at 9–19 (PSPTGPLHIGG) is the 'HIGH' region element. The short motif at 250-254 (KMSKR) is the 'KMSKS' region element. Lys-253 contributes to the ATP binding site.

Belongs to the class-I aminoacyl-tRNA synthetase family. Glutamate--tRNA ligase type 1 subfamily. In terms of assembly, monomer.

It localises to the cytoplasm. The enzyme catalyses tRNA(Glu) + L-glutamate + ATP = L-glutamyl-tRNA(Glu) + AMP + diphosphate. Its function is as follows. Catalyzes the attachment of glutamate to tRNA(Glu) in a two-step reaction: glutamate is first activated by ATP to form Glu-AMP and then transferred to the acceptor end of tRNA(Glu). The protein is Glutamate--tRNA ligase of Desulforamulus reducens (strain ATCC BAA-1160 / DSM 100696 / MI-1) (Desulfotomaculum reducens).